The sequence spans 297 residues: GTP cyclohydrolase FolE2 (297 aa).

Belongs to the GTP cyclohydrolase IV family.

It carries out the reaction GTP + H2O = 7,8-dihydroneopterin 3'-triphosphate + formate + H(+). It participates in cofactor biosynthesis; 7,8-dihydroneopterin triphosphate biosynthesis; 7,8-dihydroneopterin triphosphate from GTP: step 1/1. In terms of biological role, converts GTP to 7,8-dihydroneopterin triphosphate. The chain is GTP cyclohydrolase FolE2 from Pseudomonas fluorescens (strain ATCC BAA-477 / NRRL B-23932 / Pf-5).